The chain runs to 403 residues: Queuine tRNA-ribosyltransferase catalytic subunit 1 (403 aa).

At Ala-2 the chain carries N-acetylalanine. Asp-105 serves as the catalytic Proton acceptor. Queuine is bound at residue 105-109 (DSGGF). Ser-139 carries the phosphoserine modification. Positions 159, 202, and 229 each coordinate queuine. The tract at residues 260–266 (GVGYATD) is RNA binding. Residue Asp-279 is the Nucleophile of the active site. An RNA binding; important for wobble base 34 recognition region spans residues 284–288 (TRTAR). The Zn(2+) site is built by Cys-317, Cys-319, Cys-322, and His-348.

It belongs to the queuine tRNA-ribosyltransferase family. Heterodimer of a catalytic subunit QTRT1 and an accessory subunit QTRT2. The cofactor is Zn(2+). In terms of tissue distribution, expressed in brain, heart, kidney, liver, ling, skeletal muscle, spleen and testis.

The protein localises to the cytoplasm. Its subcellular location is the mitochondrion outer membrane. It localises to the nucleus. It catalyses the reaction guanosine(34) in tRNA + queuine = queuosine(34) in tRNA + guanine. Functionally, catalytic subunit of the queuine tRNA-ribosyltransferase (TGT) that catalyzes the base-exchange of a guanine (G) residue with queuine (Q) at position 34 (anticodon wobble position) in tRNAs with GU(N) anticodons (tRNA-Asp, -Asn, -His and -Tyr), resulting in the hypermodified nucleoside queuosine (7-(((4,5-cis-dihydroxy-2-cyclopenten-1-yl)amino)methyl)-7-deazaguanosine). Catalysis occurs through a double-displacement mechanism. The nucleophile active site attacks the C1' of nucleotide 34 to detach the guanine base from the RNA, forming a covalent enzyme-RNA intermediate. The proton acceptor active site deprotonates the incoming queuine, allowing a nucleophilic attack on the C1' of the ribose to form the product. Modification of cytoplasmic tRNAs with queuosine controls the elongation speed of cognate codons, thereby ensuring the correct folding of nascent proteins to maintain proteome integrity. The sequence is that of Queuine tRNA-ribosyltransferase catalytic subunit 1 from Mus musculus (Mouse).